Here is a 368-residue protein sequence, read N- to C-terminus: Zinc finger protein 24 (368 aa).

Residue Lys-22 forms a Glycyl lysine isopeptide (Lys-Gly) (interchain with G-Cter in SUMO2) linkage. Lys-27 participates in a covalent cross-link: Glycyl lysine isopeptide (Lys-Gly) (interchain with G-Cter in SUMO1); alternate. A Glycyl lysine isopeptide (Lys-Gly) (interchain with G-Cter in SUMO2); alternate cross-link involves residue Lys-27. The region spanning 52-134 (RQRFRQFGYQ…TVLEDLESEL (83 aa)) is the SCAN box domain. Ser-132 and Ser-142 each carry phosphoserine. Residues Lys-147, Lys-177, and Lys-236 each participate in a glycyl lysine isopeptide (Lys-Gly) (interchain with G-Cter in SUMO2) cross-link. The C2H2-type 1 zinc-finger motif lies at 251 to 273 (HICDECGKHFSQGSALILHQRIH). Residues 251-301 (HICDECGKHFSQGSALILHQRIHSGEKPYGCVECGKAFSRSSILVQHQRVH) are necessary and sufficient for nuclear localization. Phosphoserine is present on Ser-274. Glycyl lysine isopeptide (Lys-Gly) (interchain with G-Cter in SUMO2) cross-links involve residues Lys-277 and Lys-286. C2H2-type zinc fingers lie at residues 279–301 (YGCV…QRVH), 307–329 (YKCL…QRIH), and 335–357 (YECV…XXRH). At Ser-292 the chain carries Phosphoserine. A Phosphotyrosine modification is found at Tyr-335. Residues Lys-361 and Lys-367 each participate in a glycyl lysine isopeptide (Lys-Gly) (interchain with G-Cter in SUMO2) cross-link.

It belongs to the krueppel C2H2-type zinc-finger protein family. In terms of processing, sumoylated.

It is found in the nucleus. Its function is as follows. Transcription factor required for myelination of differentiated oligodendrocytes. Required for the conversion of oligodendrocytes from the premyelinating to the myelinating state. In the developing central nervous system (CNS), involved in the maintenance in the progenitor stage by promoting the cell cycle. Specifically binds to the 5'-TCAT-3' DNA sequence. Has transcription repressor activity in vitro. The chain is Zinc finger protein 24 (ZNF24) from Pan troglodytes (Chimpanzee).